We begin with the raw amino-acid sequence, 177 residues long: Large ribosomal subunit protein uL6 (177 aa).

Belongs to the universal ribosomal protein uL6 family. As to quaternary structure, part of the 50S ribosomal subunit.

In terms of biological role, this protein binds to the 23S rRNA, and is important in its secondary structure. It is located near the subunit interface in the base of the L7/L12 stalk, and near the tRNA binding site of the peptidyltransferase center. This is Large ribosomal subunit protein uL6 from Actinobacillus pleuropneumoniae serotype 5b (strain L20).